We begin with the raw amino-acid sequence, 518 residues long: Arginyl-tRNA--protein transferase 1 (518 aa).

Ser-169 is modified (phosphoserine). Residues 175–203 (EKLGSGEPSHSVKVHTVPKPGKGADLSKP) are disordered.

It belongs to the R-transferase family. In terms of assembly, monomer. Interacts with LIAT1; LIAT1 is not a substrate of ATE1, the interaction takes place in the cytoplasm and seems to increase ATE1 arginyltransferase activity.

The protein localises to the nucleus. Its subcellular location is the cytoplasm. It catalyses the reaction an N-terminal L-alpha-aminoacyl-[protein] + L-arginyl-tRNA(Arg) = an N-terminal L-arginyl-L-aminoacyl-[protein] + tRNA(Arg) + H(+). Functionally, involved in the post-translational conjugation of arginine to the N-terminal aspartate or glutamate of a protein. This arginylation is required for degradation of the protein via the ubiquitin pathway. Does not arginylate cysteine residues. The polypeptide is Arginyl-tRNA--protein transferase 1 (Homo sapiens (Human)).